Here is a 220-residue protein sequence, read N- to C-terminus: Fructose-6-phosphate aldolase 1 (220 aa).

Catalysis depends on Lys85, which acts as the Schiff-base intermediate with substrate.

Belongs to the transaldolase family. Type 3A subfamily. As to quaternary structure, homodecamer.

The protein resides in the cytoplasm. It catalyses the reaction beta-D-fructose 6-phosphate = dihydroxyacetone + D-glyceraldehyde 3-phosphate. Its function is as follows. Catalyzes the reversible formation of fructose 6-phosphate from dihydroxyacetone and D-glyceraldehyde 3-phosphate via an aldolization reaction. This chain is Fructose-6-phosphate aldolase 1 (fsaA), found in Escherichia coli O157:H7.